The sequence spans 101 residues: Apolipoprotein C-II (101 aa).

The N-terminal stretch at Met1–Gly22 is a signal peptide. Residues Ala66 to Leu74 are lipid binding. The lipoprotein lipase cofactor stretch occupies residues Ser78–Glu101.

Belongs to the apolipoprotein C2 family. In terms of processing, proapolipoprotein C-II is synthesized as a sialic acid containing glycoprotein which is subsequently desialylated prior to its proteolytic processing. Proapolipoprotein C-II, the major form found in plasma undergoes proteolytic cleavage of its N-terminal hexapeptide to generate apolipoprotein C-II, which occurs as the minor form in plasma.

The protein localises to the secreted. Its function is as follows. Component of chylomicrons, very low-density lipoproteins (VLDL), low-density lipoproteins (LDL), and high-density lipoproteins (HDL) in plasma. Plays an important role in lipoprotein metabolism as an activator of lipoprotein lipase. Both proapolipoprotein C-II and apolipoprotein C-II can activate lipoprotein lipase. In Colobus guereza (Mantled guereza), this protein is Apolipoprotein C-II (APOC2).